The primary structure comprises 352 residues: AP2/ERF and B3 domain-containing transcription factor At1g51120 (352 aa).

The tract at residues 1-20 (MDEMSNVAKTTTETSGLTDS) is disordered. A compositionally biased stretch (polar residues) spans 7–20 (VAKTTTETSGLTDS). Residues 46-103 (KFKGVVQQQNGHWGAQIYADHRRIWLGTFKSAHEAAAAYDSASIKLRSFDANSHRNFP) constitute a DNA-binding region (AP2/ERF). The TF-B3 DNA-binding region spans 178-297 (FQKELTPSDV…KTFLMIDVHH (120 aa)).

The protein belongs to the AP2/ERF transcription factor family. RAV subfamily.

Its subcellular location is the nucleus. Functionally, probably acts as a transcriptional activator. Binds to the GCC-box pathogenesis-related promoter element. May be involved in the regulation of gene expression by stress factors and by components of stress signal transduction pathways. The protein is AP2/ERF and B3 domain-containing transcription factor At1g51120 of Arabidopsis thaliana (Mouse-ear cress).